Here is a 540-residue protein sequence, read N- to C-terminus: Ribonuclease Y (540 aa).

Residues 4 to 24 (TILVPVAVAIVSVLVGGCAGY) traverse the membrane as a helical segment. In terms of domain architecture, KH spans 230-293 (TVSVVNLPSD…EIAKRALERL (64 aa)). Residues 356 to 449 (VLSHSIEVGK…VVAADTISSA (94 aa)) enclose the HD domain.

Belongs to the RNase Y family.

The protein resides in the cell membrane. Its function is as follows. Endoribonuclease that initiates mRNA decay. This is Ribonuclease Y from Lactobacillus johnsonii (strain CNCM I-12250 / La1 / NCC 533).